A 211-amino-acid chain; its full sequence is Thiamine-phosphate synthase (211 aa).

4-amino-2-methyl-5-(diphosphooxymethyl)pyrimidine-binding positions include 37 to 41 (QLRIK) and N69. Mg(2+) is bound by residues D70 and D89. S108 contributes to the 4-amino-2-methyl-5-(diphosphooxymethyl)pyrimidine binding site. 134-136 (TQT) lines the 2-[(2R,5Z)-2-carboxy-4-methylthiazol-5(2H)-ylidene]ethyl phosphate pocket. K137 is a 4-amino-2-methyl-5-(diphosphooxymethyl)pyrimidine binding site. 2-[(2R,5Z)-2-carboxy-4-methylthiazol-5(2H)-ylidene]ethyl phosphate contacts are provided by residues G166 and 186–187 (VS).

The protein belongs to the thiamine-phosphate synthase family. It depends on Mg(2+) as a cofactor.

It carries out the reaction 2-[(2R,5Z)-2-carboxy-4-methylthiazol-5(2H)-ylidene]ethyl phosphate + 4-amino-2-methyl-5-(diphosphooxymethyl)pyrimidine + 2 H(+) = thiamine phosphate + CO2 + diphosphate. It catalyses the reaction 2-(2-carboxy-4-methylthiazol-5-yl)ethyl phosphate + 4-amino-2-methyl-5-(diphosphooxymethyl)pyrimidine + 2 H(+) = thiamine phosphate + CO2 + diphosphate. The catalysed reaction is 4-methyl-5-(2-phosphooxyethyl)-thiazole + 4-amino-2-methyl-5-(diphosphooxymethyl)pyrimidine + H(+) = thiamine phosphate + diphosphate. Its pathway is cofactor biosynthesis; thiamine diphosphate biosynthesis; thiamine phosphate from 4-amino-2-methyl-5-diphosphomethylpyrimidine and 4-methyl-5-(2-phosphoethyl)-thiazole: step 1/1. Functionally, condenses 4-methyl-5-(beta-hydroxyethyl)thiazole monophosphate (THZ-P) and 2-methyl-4-amino-5-hydroxymethyl pyrimidine pyrophosphate (HMP-PP) to form thiamine monophosphate (TMP). The protein is Thiamine-phosphate synthase of Escherichia coli O6:H1 (strain CFT073 / ATCC 700928 / UPEC).